A 233-amino-acid polypeptide reads, in one-letter code: Histone H1-I (233 aa).

Disordered stretches follow at residues 1 to 55 and 115 to 233; these read MSDS…HPPV and TGAS…KKSK. The segment covering 17–29 has biased composition (low complexity); sequence KAATPAKSPAKSP. The region spanning 51 to 125 is the H15 domain; that stretch reads THPPVSEMVV…GASGSFKMPP (75 aa). Composition is skewed to basic and acidic residues over residues 128 to 137 and 144 to 155; these read KKVDKPEAAP and PKREIEKKEKKV. Basic residues-rich tracts occupy residues 172-186, 199-213, and 223-233; these read AAKK…KKAA, SPKK…KPTP, and AAAKKPAKKSK.

Belongs to the histone H1/H5 family.

The protein localises to the nucleus. The protein resides in the chromosome. In terms of biological role, histones H1 are necessary for the condensation of nucleosome chains into higher-order structures. In Glyptotendipes salinus (Midge), this protein is Histone H1-I.